Reading from the N-terminus, the 206-residue chain is Bis(5'-adenosyl)-triphosphatase (206 aa).

The region spanning 3 to 115 is the HIT domain; the sequence is KPIYFSKFLV…KINNVGDLIY (113 aa). Residues 96-100 carry the Histidine triad motif motif; that stretch reads HLHTH. Residue H98 is the Tele-AMP-histidine intermediate of the active site. The tract at residues 143-164 is disordered; that stretch reads RQARKNNSTSATVDGDELSQGP.

As to quaternary structure, homodimer. Mn(2+) is required as a cofactor.

It is found in the cytoplasm. The protein localises to the nucleus. Its subcellular location is the mitochondrion. It catalyses the reaction P(1),P(3)-bis(5'-adenosyl) triphosphate + H2O = AMP + ADP + 2 H(+). Functionally, cleaves A-5'-PPP-5'A to yield AMP and ADP. Can cleave all dinucleoside polyphosphates, provided the phosphate chain contains at least 3 phosphates and that 1 of the 2 bases composing the nucleotide is a purine. Is most effective on dinucleoside triphosphates. Negatively regulates intracellular dinucleoside polyphosphate levels, which elevate following heat shock. This is Bis(5'-adenosyl)-triphosphatase (HNT2) from Saccharomyces cerevisiae (strain RM11-1a) (Baker's yeast).